We begin with the raw amino-acid sequence, 100 residues long: Large ribosomal subunit protein uL23 (100 aa).

Belongs to the universal ribosomal protein uL23 family. In terms of assembly, part of the 50S ribosomal subunit. Contacts protein L29, and trigger factor when it is bound to the ribosome.

In terms of biological role, one of the early assembly proteins it binds 23S rRNA. One of the proteins that surrounds the polypeptide exit tunnel on the outside of the ribosome. Forms the main docking site for trigger factor binding to the ribosome. This chain is Large ribosomal subunit protein uL23, found in Synechococcus sp. (strain CC9902).